Here is a 205-residue protein sequence, read N- to C-terminus: Thymidine kinase (205 aa).

ATP is bound by residues 9–16 (SAMNAGKS) and 87–90 (DESQ). The Proton acceptor role is filled by Glu-88. Residues Cys-145, Cys-147, Cys-182, and His-185 each contribute to the Zn(2+) site.

It belongs to the thymidine kinase family. In terms of assembly, homotetramer.

Its subcellular location is the cytoplasm. It carries out the reaction thymidine + ATP = dTMP + ADP + H(+). This Salmonella paratyphi A (strain ATCC 9150 / SARB42) protein is Thymidine kinase.